We begin with the raw amino-acid sequence, 175 residues long: Short chain dehydrogenase/reductase dpmpG (175 aa).

4 residues coordinate NADP(+): Ile-18, Asp-71, Asn-98, and Lys-132.

Belongs to the short-chain dehydrogenases/reductases (SDR) family.

It functions in the pathway secondary metabolite biosynthesis; terpenoid biosynthesis. In terms of biological role, short chain dehydrogenase/reductase; part of the gene cluster that mediates the biosynthesis of diterpenoid pyrones. The first step of the pathway is the synthesis of the alpha-pyrone moiety by the polyketide synthase dpmpA via condensation of one acetyl-CoA starter unit with 3 malonyl-CoA units and 2 methylations. The alpha-pyrone is then combined with geranylgeranyl pyrophosphate (GGPP) formed by the GGPP synthase dpmpD through the action of the prenyltransferase dpmpC to yield a linear alpha-pyrone diterpenoid. Subsequent steps in the diterpenoid pyrone biosynthetic pathway involve the decalin core formation, which is initiated by the epoxidation of the C10-C11 olefin by the FAD-dependent oxidoreductase dpmpE, and is followed by a cyclization cascade catalyzed by the terpene cyclase dpmpB. The short chain dehydrogenase/reductase dpmpG then oxidizes the 8S hydroxy group to a ketone and the short chain dehydrogenase/reductase dpmpH reduces the ketone to the 8R hydroxy group to yield higginsianin B. Higginsianin B is further methylated by the methyltransferase dpmpI to produce the intermediate named FDDP B. The cytochrome P450 monooxygenase dpmpJ then oxidizes the C-26 methyl to primary alcohol, producing the final diterpenoid pyrone with a C-26 primary alcohol on the gamma-pyrone moiety named FDDP C. This is Short chain dehydrogenase/reductase dpmpG from Macrophomina phaseolina (strain MS6) (Charcoal rot fungus).